The sequence spans 548 residues: Glucan 1,4-alpha-maltotetraohydrolase (548 aa).

An N-terminal signal peptide occupies residues 1–21; that stretch reads MSHILRAAVLAAMLLPLPSMA. Residues D22, Q23, H34, D37, and E38 each contribute to the Ca(2+) site. 99 to 100 serves as a coordination point for substrate; the sequence is YF. Residue N137 participates in Ca(2+) binding. H138 is a substrate binding site. C161 and C171 are disulfide-bonded. Residues D172 and D175 each coordinate Ca(2+). Substrate is bound at residue 177–181; it reads FIGGD. D183 contributes to the Ca(2+) binding site. R212 serves as a coordination point for substrate. D214 functions as the Nucleophile in the catalytic mechanism. 217 to 218 is a binding site for substrate; it reads RG. G218 contacts Ca(2+). Cysteines 237 and 272 form a disulfide. E240 acts as the Proton donor in catalysis. Residues H314 and Q326 each coordinate substrate. A CBM20 domain is found at 446–548; that stretch reads GEPGALVSVS…SEGATTVGRL (103 aa). The span at 529–542 shows a compositional bias: polar residues; that stretch reads QGGANNSLTPSEGA. The disordered stretch occupies residues 529 to 548; the sequence is QGGANNSLTPSEGATTVGRL.

This sequence belongs to the glycosyl hydrolase 13 family. As to quaternary structure, monomer. The cofactor is Ca(2+).

Its subcellular location is the secreted. It catalyses the reaction Hydrolysis of (1-&gt;4)-alpha-D-glucosidic linkages in amylaceous polysaccharides, to remove successive maltotetraose residues from the non-reducing chain ends.. Its pathway is glycan degradation; starch degradation. In Stutzerimonas stutzeri (Pseudomonas stutzeri), this protein is Glucan 1,4-alpha-maltotetraohydrolase (amyP).